The chain runs to 252 residues: Chitooligosaccharide deacetylase (252 aa).

The Mg(2+) site is built by histidine 61 and histidine 125.

This sequence belongs to the YdjC deacetylase family. ChbG subfamily. As to quaternary structure, homodimer. Requires Mg(2+) as cofactor.

It is found in the cytoplasm. The enzyme catalyses N,N'-diacetylchitobiose + H2O = N-acetyl-beta-D-glucosaminyl-(1-&gt;4)-D-glucosamine + acetate. It catalyses the reaction diacetylchitobiose-6'-phosphate + H2O = N'-monoacetylchitobiose-6'-phosphate + acetate. It functions in the pathway glycan degradation; chitin degradation. Involved in the degradation of chitin. ChbG is essential for growth on the acetylated chitooligosaccharides chitobiose and chitotriose but is dispensable for growth on cellobiose and chitosan dimer, the deacetylated form of chitobiose. Deacetylation of chitobiose-6-P and chitotriose-6-P is necessary for both the activation of the chb promoter by the regulatory protein ChbR and the hydrolysis of phosphorylated beta-glucosides by the phospho-beta-glucosidase ChbF. Catalyzes the removal of only one acetyl group from chitobiose-6-P to yield monoacetylchitobiose-6-P, the inducer of ChbR and the substrate of ChbF. This is Chitooligosaccharide deacetylase from Escherichia coli O6:H1 (strain CFT073 / ATCC 700928 / UPEC).